Here is a 64-residue protein sequence, read N- to C-terminus: U-scoloptoxin(14)-Er1a (64 aa).

The N-terminal stretch at 1–23 (MRPSFPLLLIMLLVCTAHHMVSG) is a signal peptide.

This sequence belongs to the scoloptoxin-14 family. Contains 4 disulfide bonds. Expressed by the venom gland.

The protein localises to the secreted. The chain is U-scoloptoxin(14)-Er1a from Ethmostigmus rubripes (Giant centipede).